Consider the following 274-residue polypeptide: Large ribosomal subunit protein uL2 (274 aa).

A disordered region spans residues 223–257 (VAMNPVDHPHGGGEGRTSGGRHPVTPWGIPTKGYK).

This sequence belongs to the universal ribosomal protein uL2 family. As to quaternary structure, part of the 50S ribosomal subunit. Forms a bridge to the 30S subunit in the 70S ribosome.

Functionally, one of the primary rRNA binding proteins. Required for association of the 30S and 50S subunits to form the 70S ribosome, for tRNA binding and peptide bond formation. It has been suggested to have peptidyltransferase activity; this is somewhat controversial. Makes several contacts with the 16S rRNA in the 70S ribosome. The sequence is that of Large ribosomal subunit protein uL2 from Geobacter sulfurreducens (strain ATCC 51573 / DSM 12127 / PCA).